We begin with the raw amino-acid sequence, 524 residues long: Probable plastidic glucose transporter 1 (524 aa).

The next 12 helical transmembrane spans lie at 88–108, 122–142, 151–171, 179–199, 208–228, 239–259, 320–340, 357–377, 386–406, 420–440, 452–472, and 483–503; these read MANFLFGYHIGVMNGPIVSIA, LVVSIFIAGAFIGSIVAGPLV, FQIFTIPLILGALVSAQAHSL, FLVGLGIGVNTVLVPIYISEV, LGTLCQIGTCLGIIFSLLLGI, TMLYVASMPGFLLALGMQFAV, VAFIGGSLFVLQQFAGINGVL, QASLYVGVTNFAGALCASYLI, LIGSYLGMAVSMFLIVYAVGF, GTLMYIFSFAIGAGPVTGLII, IMGFSFSVHWVSNFLVGLFFL, and VYASFGSVSLLAAAFSHLFTV.

It belongs to the major facilitator superfamily. Sugar transporter (TC 2.A.1.1) family.

It is found in the plastid. The protein localises to the chloroplast membrane. In terms of biological role, may be involved in the efflux of glucose towards the cytosol. The polypeptide is Probable plastidic glucose transporter 1 (Arabidopsis thaliana (Mouse-ear cress)).